Consider the following 313-residue polypeptide: Porphobilinogen deaminase (313 aa).

An S-(dipyrrolylmethanemethyl)cysteine modification is found at C242.

This sequence belongs to the HMBS family. As to quaternary structure, monomer. Dipyrromethane is required as a cofactor.

The catalysed reaction is 4 porphobilinogen + H2O = hydroxymethylbilane + 4 NH4(+). It functions in the pathway porphyrin-containing compound metabolism; protoporphyrin-IX biosynthesis; coproporphyrinogen-III from 5-aminolevulinate: step 2/4. Tetrapolymerization of the monopyrrole PBG into the hydroxymethylbilane pre-uroporphyrinogen in several discrete steps. The chain is Porphobilinogen deaminase from Pseudomonas paraeruginosa (strain DSM 24068 / PA7) (Pseudomonas aeruginosa (strain PA7)).